A 246-amino-acid polypeptide reads, in one-letter code: 3-deoxy-manno-octulosonate cytidylyltransferase (246 aa).

This sequence belongs to the KdsB family.

It is found in the cytoplasm. The catalysed reaction is 3-deoxy-alpha-D-manno-oct-2-ulosonate + CTP = CMP-3-deoxy-beta-D-manno-octulosonate + diphosphate. It participates in nucleotide-sugar biosynthesis; CMP-3-deoxy-D-manno-octulosonate biosynthesis; CMP-3-deoxy-D-manno-octulosonate from 3-deoxy-D-manno-octulosonate and CTP: step 1/1. It functions in the pathway bacterial outer membrane biogenesis; lipopolysaccharide biosynthesis. Its function is as follows. Activates KDO (a required 8-carbon sugar) for incorporation into bacterial lipopolysaccharide in Gram-negative bacteria. The polypeptide is 3-deoxy-manno-octulosonate cytidylyltransferase (Bradyrhizobium diazoefficiens (strain JCM 10833 / BCRC 13528 / IAM 13628 / NBRC 14792 / USDA 110)).